The primary structure comprises 564 residues: Proline--tRNA ligase (564 aa).

Belongs to the class-II aminoacyl-tRNA synthetase family. ProS type 1 subfamily. Homodimer.

It localises to the cytoplasm. The enzyme catalyses tRNA(Pro) + L-proline + ATP = L-prolyl-tRNA(Pro) + AMP + diphosphate. In terms of biological role, catalyzes the attachment of proline to tRNA(Pro) in a two-step reaction: proline is first activated by ATP to form Pro-AMP and then transferred to the acceptor end of tRNA(Pro). As ProRS can inadvertently accommodate and process non-cognate amino acids such as alanine and cysteine, to avoid such errors it has two additional distinct editing activities against alanine. One activity is designated as 'pretransfer' editing and involves the tRNA(Pro)-independent hydrolysis of activated Ala-AMP. The other activity is designated 'posttransfer' editing and involves deacylation of mischarged Ala-tRNA(Pro). The misacylated Cys-tRNA(Pro) is not edited by ProRS. In Xanthomonas campestris pv. campestris (strain 8004), this protein is Proline--tRNA ligase.